The sequence spans 845 residues: Prickle-like protein 2 (845 aa).

The PET domain occupies 18 to 126 (FDFQRSSTSD…NVRPFPVTMT (109 aa)). Residue Ser-92 is modified to Phosphoserine. 3 LIM zinc-binding domains span residues 128-193 (AICE…CLKP), 193-253 (PRCA…LYAE), and 253-317 (EYCD…EDPN). Disordered regions lie at residues 314-346 (EDPNGSDSSDSAFQNARAKESRRSAKIGKNKGK) and 483-546 (YSDM…GSME). Over residues 318–327 (GSDSSDSAFQ) the composition is skewed to polar residues. Residues Ser-319, Ser-321, and Ser-322 each carry the phosphoserine modification. 3 positions are modified to phosphothreonine: Thr-535, Thr-537, and Thr-540. A phosphoserine mark is found at Ser-544 and Ser-547. The segment at 558 to 581 (AEGGAKRQEHLSRFSMPDLSKDSG) is disordered. 2 positions are modified to phosphoserine: Ser-608 and Ser-643. The tract at residues 642–700 (QSFDFDGGIASSKLPGQEGVHIQPMSERTRRRTTSRDDNRRFRPHRSRRSRRSRSDNAL) is disordered. The span at 683 to 693 (FRPHRSRRSRR) shows a compositional bias: basic residues. Ser-732 is subject to Phosphoserine. Residues 823–845 (STLGGRGQLHSRKRQKSKNCIIS) are disordered. Position 842 is a cysteine methyl ester (Cys-842). Cys-842 carries S-farnesyl cysteine lipidation. Residues 843-845 (IIS) constitute a propeptide, removed in mature form.

The protein belongs to the prickle / espinas / testin family. Expressed in the hippocampus and cerebral cortex.

The protein localises to the nucleus membrane. This chain is Prickle-like protein 2 (Prickle2), found in Mus musculus (Mouse).